Here is a 149-residue protein sequence, read N- to C-terminus: Large ribosomal subunit protein bL9 (149 aa).

It belongs to the bacterial ribosomal protein bL9 family.

In terms of biological role, binds to the 23S rRNA. The protein is Large ribosomal subunit protein bL9 of Leptospira borgpetersenii serovar Hardjo-bovis (strain JB197).